A 215-amino-acid chain; its full sequence is Ribonuclease HII (215 aa).

The RNase H type-2 domain maps to 24–215; sequence GVVFGVDEVG…PIRQFYENVD (192 aa). Asp-30, Glu-31, and Asp-125 together coordinate a divalent metal cation.

Belongs to the RNase HII family. Requires Mn(2+) as cofactor. Mg(2+) serves as cofactor.

It localises to the cytoplasm. It carries out the reaction Endonucleolytic cleavage to 5'-phosphomonoester.. In terms of biological role, endonuclease that specifically degrades the RNA of RNA-DNA hybrids. This is Ribonuclease HII from Zymomonas mobilis subsp. mobilis (strain ATCC 31821 / ZM4 / CP4).